The following is a 64-amino-acid chain: DNA-directed RNA polymerase subunit Rpo10 (64 aa).

Residues C7, C10, C45, and C46 each contribute to the Zn(2+) site.

It belongs to the archaeal Rpo10/eukaryotic RPB10 RNA polymerase subunit family. As to quaternary structure, part of the RNA polymerase complex. Requires Zn(2+) as cofactor.

It localises to the cytoplasm. It catalyses the reaction RNA(n) + a ribonucleoside 5'-triphosphate = RNA(n+1) + diphosphate. In terms of biological role, DNA-dependent RNA polymerase (RNAP) catalyzes the transcription of DNA into RNA using the four ribonucleoside triphosphates as substrates. The polypeptide is DNA-directed RNA polymerase subunit Rpo10 (Haloquadratum walsbyi (strain DSM 16790 / HBSQ001)).